A 248-amino-acid chain; its full sequence is MTYNLNCDISNSFYRLAEVEVGKHLYWEIAGFKLHGQVFIVSWLVMLALIIFALNGTRKLNQIPSGIQNFMEYVYEFLQDIAKNQIGEEDYRPWVPYISTVFLFIFGANWAGALIPWKLIQLPEGELAAPTNDINVTVALALLTSISYFYAGISKKGISYFSRYVQPTPILLPINILEDFTKPLSLSFRLFGNVLADELVVSVFALLVPILIPLPVMTLGLFASSVQALIFSTLSAAYIGEALEDHGH.

Helical transmembrane passes span 34 to 54, 95 to 115, 134 to 154, and 203 to 223; these read LHGQ…IFAL, VPYI…GALI, INVT…AGIS, and VFAL…GLFA.

It belongs to the ATPase A chain family. As to quaternary structure, F-type ATPases have 2 components, CF(1) - the catalytic core - and CF(0) - the membrane proton channel. CF(1) has five subunits: alpha(3), beta(3), gamma(1), delta(1), epsilon(1). CF(0) has four main subunits: a, b, b' and c.

The protein localises to the plastid. It localises to the chloroplast thylakoid membrane. Key component of the proton channel; it plays a direct role in the translocation of protons across the membrane. In Guillardia theta (Cryptophyte), this protein is ATP synthase subunit a, chloroplastic.